A 505-amino-acid chain; its full sequence is 2,3-bisphosphoglycerate-independent phosphoglycerate mutase (505 aa).

Mn(2+) contacts are provided by Asp-11 and Ser-61. Ser-61 functions as the Phosphoserine intermediate in the catalytic mechanism. Substrate is bound by residues His-122, 152 to 153 (RD), Arg-183, Arg-189, 259 to 262 (RTDR), and Lys-332. 5 residues coordinate Mn(2+): Asp-399, His-403, Asp-440, His-441, and His-458.

This sequence belongs to the BPG-independent phosphoglycerate mutase family. As to quaternary structure, monomer. Mn(2+) is required as a cofactor.

It catalyses the reaction (2R)-2-phosphoglycerate = (2R)-3-phosphoglycerate. The protein operates within carbohydrate degradation; glycolysis; pyruvate from D-glyceraldehyde 3-phosphate: step 3/5. Functionally, catalyzes the interconversion of 2-phosphoglycerate and 3-phosphoglycerate. The chain is 2,3-bisphosphoglycerate-independent phosphoglycerate mutase from Flavobacterium psychrophilum (strain ATCC 49511 / DSM 21280 / CIP 103535 / JIP02/86).